The following is a 116-amino-acid chain: Large ribosomal subunit protein uL22 (116 aa).

It belongs to the universal ribosomal protein uL22 family. In terms of assembly, part of the 50S ribosomal subunit.

Functionally, this protein binds specifically to 23S rRNA; its binding is stimulated by other ribosomal proteins, e.g. L4, L17, and L20. It is important during the early stages of 50S assembly. It makes multiple contacts with different domains of the 23S rRNA in the assembled 50S subunit and ribosome. Its function is as follows. The globular domain of the protein is located near the polypeptide exit tunnel on the outside of the subunit, while an extended beta-hairpin is found that lines the wall of the exit tunnel in the center of the 70S ribosome. This is Large ribosomal subunit protein uL22 from Wolbachia pipientis subsp. Culex pipiens (strain wPip).